Here is an 881-residue protein sequence, read N- to C-terminus: DNA mismatch repair protein MutS (881 aa).

626–633 (GPNMAGKS) serves as a coordination point for ATP.

It belongs to the DNA mismatch repair MutS family.

In terms of biological role, this protein is involved in the repair of mismatches in DNA. It is possible that it carries out the mismatch recognition step. This protein has a weak ATPase activity. This chain is DNA mismatch repair protein MutS, found in Desulfosudis oleivorans (strain DSM 6200 / JCM 39069 / Hxd3) (Desulfococcus oleovorans).